Here is a 296-residue protein sequence, read N- to C-terminus: 4-hydroxy-tetrahydrodipicolinate synthase (296 aa).

T47 contributes to the pyruvate binding site. Y136 functions as the Proton donor/acceptor in the catalytic mechanism. The active-site Schiff-base intermediate with substrate is the K164. V206 contacts pyruvate.

Belongs to the DapA family. As to quaternary structure, homotetramer; dimer of dimers.

It localises to the cytoplasm. It carries out the reaction L-aspartate 4-semialdehyde + pyruvate = (2S,4S)-4-hydroxy-2,3,4,5-tetrahydrodipicolinate + H2O + H(+). It functions in the pathway amino-acid biosynthesis; L-lysine biosynthesis via DAP pathway; (S)-tetrahydrodipicolinate from L-aspartate: step 3/4. In terms of biological role, catalyzes the condensation of (S)-aspartate-beta-semialdehyde [(S)-ASA] and pyruvate to 4-hydroxy-tetrahydrodipicolinate (HTPA). The sequence is that of 4-hydroxy-tetrahydrodipicolinate synthase from Thermosynechococcus vestitus (strain NIES-2133 / IAM M-273 / BP-1).